Reading from the N-terminus, the 1042-residue chain is Ribosome biogenesis protein NOC1 (1042 aa).

Disordered regions lie at residues 1-20, 28-79, 101-128, 148-214, 546-567, and 897-1020; these read MGLK…AFDE, GKID…AAKD, LVAD…SLDQ, NRED…IPQD, LNGD…GSLT, and GKMT…LKTL. 2 stretches are compositionally biased toward basic and acidic residues: residues 9-18 and 63-79; these read QQRDIGKPAF and HPTE…AAKD. The span at 118–128 shows a compositional bias: polar residues; the sequence is PKISSEQSLDQ. 2 stretches are compositionally biased toward acidic residues: residues 153–164 and 173–194; these read NTEDEASPDEDA and SDSD…SFSD. Residues 195 to 207 show a composition bias toward basic and acidic residues; it reads NEEKVTEKVDSGE. Residues 902–911 are compositionally biased toward basic and acidic residues; it reads KRDETKREFG. Over residues 937 to 957 the composition is skewed to acidic residues; sequence NVDDDSDADLGDFDYSDDEED. The span at 962–972 shows a compositional bias: low complexity; sequence DGSMSDIGMDS. Residues 978 to 994 show a composition bias toward acidic residues; the sequence is IFDDAGESDEQSSGEDE.

This sequence belongs to the CBF/MAK21 family. As to quaternary structure, interacts with NOC2. Forms a nucleolar complex with NOC2 that binds to 90S and 66S pre-ribosomes.

It is found in the nucleus. It localises to the nucleolus. Required for 60S ribosomal subunit synthesis. This chain is Ribosome biogenesis protein NOC1 (NOC1), found in Chaetomium thermophilum (strain DSM 1495 / CBS 144.50 / IMI 039719) (Thermochaetoides thermophila).